The following is a 646-amino-acid chain: Threonine--tRNA ligase (646 aa).

The TGS domain occupies methionine 1–threonine 63. The segment at aspartate 244 to proline 541 is catalytic. Zn(2+)-binding residues include cysteine 337, histidine 388, and histidine 518.

It belongs to the class-II aminoacyl-tRNA synthetase family. In terms of assembly, homodimer. Requires Zn(2+) as cofactor.

It is found in the cytoplasm. It catalyses the reaction tRNA(Thr) + L-threonine + ATP = L-threonyl-tRNA(Thr) + AMP + diphosphate + H(+). Its function is as follows. Catalyzes the attachment of threonine to tRNA(Thr) in a two-step reaction: L-threonine is first activated by ATP to form Thr-AMP and then transferred to the acceptor end of tRNA(Thr). Also edits incorrectly charged L-seryl-tRNA(Thr). This chain is Threonine--tRNA ligase, found in Oceanobacillus iheyensis (strain DSM 14371 / CIP 107618 / JCM 11309 / KCTC 3954 / HTE831).